A 472-amino-acid polypeptide reads, in one-letter code: Kynureninase 2 (472 aa).

Pyridoxal 5'-phosphate-binding positions include Leu-133, Thr-134, 162–165, Asp-247, His-250, and Tyr-272; that span reads FPSD. Lys-273 is subject to N6-(pyridoxal phosphate)lysine. Pyridoxal 5'-phosphate-binding residues include Trp-314 and Asn-342.

The protein belongs to the kynureninase family. Homodimer. Pyridoxal 5'-phosphate is required as a cofactor.

The protein localises to the cytoplasm. The catalysed reaction is L-kynurenine + H2O = anthranilate + L-alanine + H(+). It catalyses the reaction 3-hydroxy-L-kynurenine + H2O = 3-hydroxyanthranilate + L-alanine + H(+). Its pathway is amino-acid degradation; L-kynurenine degradation; L-alanine and anthranilate from L-kynurenine: step 1/1. It functions in the pathway cofactor biosynthesis; NAD(+) biosynthesis; quinolinate from L-kynurenine: step 2/3. In terms of biological role, catalyzes the cleavage of L-kynurenine (L-Kyn) and L-3-hydroxykynurenine (L-3OHKyn) into anthranilic acid (AA) and 3-hydroxyanthranilic acid (3-OHAA), respectively. In Neurospora crassa (strain ATCC 24698 / 74-OR23-1A / CBS 708.71 / DSM 1257 / FGSC 987), this protein is Kynureninase 2 (kyn-2).